A 113-amino-acid chain; its full sequence is Integration host factor subunit alpha (113 aa).

Belongs to the bacterial histone-like protein family. Heterodimer of an alpha and a beta chain.

Its function is as follows. This protein is one of the two subunits of integration host factor, a specific DNA-binding protein that functions in genetic recombination as well as in transcriptional and translational control. This Rhodopseudomonas palustris (strain BisA53) protein is Integration host factor subunit alpha.